The sequence spans 752 residues: DNA ligase (752 aa).

A disordered region spans residues methionine 1–alanine 25. NAD(+) contacts are provided by residues aspartate 91–aspartate 95, serine 140–leucine 141, and glutamate 170. The N6-AMP-lysine intermediate role is filled by lysine 172. Residues arginine 193, glutamate 233, lysine 350, and lysine 374 each coordinate NAD(+). Zn(2+)-binding residues include cysteine 474, cysteine 477, cysteine 493, and cysteine 499. The BRCT domain occupies serine 669 to leucine 752.

This sequence belongs to the NAD-dependent DNA ligase family. LigA subfamily. Requires Mg(2+) as cofactor. Mn(2+) is required as a cofactor.

It carries out the reaction NAD(+) + (deoxyribonucleotide)n-3'-hydroxyl + 5'-phospho-(deoxyribonucleotide)m = (deoxyribonucleotide)n+m + AMP + beta-nicotinamide D-nucleotide.. In terms of biological role, DNA ligase that catalyzes the formation of phosphodiester linkages between 5'-phosphoryl and 3'-hydroxyl groups in double-stranded DNA using NAD as a coenzyme and as the energy source for the reaction. It is essential for DNA replication and repair of damaged DNA. This Nocardioides sp. (strain ATCC BAA-499 / JS614) protein is DNA ligase.